Reading from the N-terminus, the 367-residue chain is Alginate lyase (367 aa).

The N-terminal stretch at 1–24 (MTLLKRISSPALLALALFGGAAHA) is a signal peptide. Substrate contacts are provided by residues 63 to 64 (SK), 136 to 137 (HT), and tyrosine 254.

It belongs to the polysaccharide lyase 5 family.

The protein localises to the periplasm. It carries out the reaction Eliminative cleavage of alginate to give oligosaccharides with 4-deoxy-alpha-L-erythro-hex-4-enuronosyl groups at their non-reducing ends and beta-D-mannuronate at their reducing end.. Catalyzes the depolymerization of alginate by cleaving the beta-1,4 glycosidic bond between two adjacent sugar residues via a beta-elimination mechanism. May serve to degrade mislocalized alginate that is trapped in the periplasmic space. This chain is Alginate lyase, found in Pseudomonas putida (strain GB-1).